Reading from the N-terminus, the 209-residue chain is MQTLRQEAARPCIPSGTLEASFPAPLYSDDYLSLEGSRWPPAIRQATRWKYTPMGRDAAGQLWYTGLTNSDAWEAWYNLPRAPASPFREAYNRWHSCYQHRECSMPSAYTQHLRETAWHDPIVPAQYQAPSTRWGSALWKDRPIRGKEYVLNRNRYGVEPLWRASDYVPSLSAPQRPPGTTQNYREWVLEPYCPSTCQRSPPSLTPTPR.

In terms of assembly, microtubule inner protein component of sperm flagellar doublet microtubules.

The protein localises to the cytoplasm. It localises to the cytoskeleton. It is found in the cilium axoneme. Its subcellular location is the flagellum axoneme. In terms of biological role, microtubule inner protein (MIP) part of the dynein-decorated doublet microtubules (DMTs) in cilia axoneme, which is required for motile cilia beating. Located at the center of the tektin bundle where may function to recruit tektins or stabilize the bundle. The polypeptide is Tektin bundle-interacting protein 1 (Homo sapiens (Human)).